The primary structure comprises 103 residues: Large ribosomal subunit protein bL21 (103 aa).

It belongs to the bacterial ribosomal protein bL21 family. In terms of assembly, part of the 50S ribosomal subunit. Contacts protein L20.

In terms of biological role, this protein binds to 23S rRNA in the presence of protein L20. This chain is Large ribosomal subunit protein bL21, found in Heliobacterium modesticaldum (strain ATCC 51547 / Ice1).